The chain runs to 101 residues: Immunity protein CdiI-2 (101 aa).

In terms of assembly, specifically interacts with the truncated CT fragment of cognate toxin protein CdiA-2, which inhibits CdiA-2 tRNA nuclease activity.

Immunity protein component of a toxin-immunity protein module, which functions as a cellular contact-dependent growth inhibition (CDI) system. CDI modules allow bacteria to communicate with and inhibit the growth of closely related neighboring bacteria in a contact-dependent fashion. Neutralizes the toxic activity of cognate toxin CdiA (C-terminal 301 residue CT fragment) upon expression in E.coli. Does not inhibit toxic activity of CdiA from other strains of B.pseudomallei. Functionally, expression of this cdiAIB locus in B.thailandensis confers protection against other bacteria carrying the locus; growth inhibition requires cellular contact. The protein is Immunity protein CdiI-2 (cdiI2) of Burkholderia pseudomallei (strain 1026b).